Consider the following 647-residue polypeptide: MSDEIFPVPAEWKKRAIVDAEKYRHMYEASINDPESFWRREGLRIDWMKPYTKIKDTSFDPHNVSIKWFEDGTLNASVNCIDRHLERRAGQVAIIWEGDDPSIDRKITYRELHDEVCRFANVLKARGVKKGDRVTIYMPMIPEAAYAMLACARIGAVHSVVFGGFSPDSLAGRIVDCASSCVITADEGVRGGRKIPLKANTDEALKKCPGVKSVIVVKHTGGAVAMEKGRDVWYAEEAAKVSATCAPEEMNAEDPLFILYTSGSTGKPKGVLHTTGGYMVYASMTHQYVFDYHDGDIYWCTADVGWVTGHSYILYGPLANGATTLMFEGVPNYPDASRCWQVIDKHEVNIFYTAPTALRALMREGEEPVKKTSRKSLRLLGSVGEPINPEAWLWYHRVVGDGRCPIVDTWWQTETGGILISPLPGAIATKPGSATKPFFGVQPVIVDAEGNVQEGATTGNLCIDDSWPGQMRTVYGDHQRFVETYFIQYPGRYFTGDGCRRDEDGYYWITGRVDDVLNVSGHRMGTAEVESALVAHPKVAEAAVVGYPHDIKGQGIYAYVTLIAGEAATEELRKELVTWVRKEIGPIASPDLIQFAPGLPKTRSGKIMRRILRKIAEDDFSNLGDTSTLADPSVVTDLVDNRQNKAG.

Residues 190–193 (RGGR), T308, and N332 each bind CoA. Residues 384-386 (GEP), 408-413 (DTWWQT), D497, and R512 contribute to the ATP site. S520 contacts CoA. R523 contributes to the ATP binding site. The Mg(2+) site is built by V534, H536, and V539. R581 lines the CoA pocket. The residue at position 606 (K606) is an N6-acetyllysine.

The protein belongs to the ATP-dependent AMP-binding enzyme family. Requires Mg(2+) as cofactor. In terms of processing, acetylated. Deacetylation by the SIR2-homolog deacetylase activates the enzyme.

The enzyme catalyses acetate + ATP + CoA = acetyl-CoA + AMP + diphosphate. Catalyzes the conversion of acetate into acetyl-CoA (AcCoA), an essential intermediate at the junction of anabolic and catabolic pathways. AcsA undergoes a two-step reaction. In the first half reaction, AcsA combines acetate with ATP to form acetyl-adenylate (AcAMP) intermediate. In the second half reaction, it can then transfer the acetyl group from AcAMP to the sulfhydryl group of CoA, forming the product AcCoA. The chain is Acetyl-coenzyme A synthetase from Parvibaculum lavamentivorans (strain DS-1 / DSM 13023 / NCIMB 13966).